A 113-amino-acid chain; its full sequence is uncharacterized protein (113 aa).

The first 16 residues, M1–A16, serve as a signal peptide directing secretion. The segment covering G81 to N101 has biased composition (gly residues). A disordered region spans residues G81–G103.

Nacreous layer of shell (at protein level).

Its subcellular location is the secreted. This is an uncharacterized protein from Margaritifera margaritifera (Freshwater pearl mussel).